Consider the following 437-residue polypeptide: Probable N-acetylmuramidase (437 aa).

The first 57 residues, 1 to 57 (MPVSRVKVKNRHLKKKTKKPLAFYKPATKFAGAVLIAGTLTTTHELLLQQTSPMVQA), serve as a signal peptide directing secretion. Disordered regions lie at residues 217 to 244 (SSAG…SSTT), 290 to 320 (ASST…SQTT), and 367 to 392 (AASN…NSNA). In terms of domain architecture, LysM 1 spans 243–286 (TTYTVKSGDTLWGISQRYGISVAQIQSANNLKSTIIYIGQKLVL). Over residues 290–317 (ASSTNSGGSNNSASTTPTTSVTPAKPTS) the composition is skewed to low complexity. The 44-residue stretch at 319–362 (TTVKVKSGDTLWALSVKYKTSIAQLKSWNHLSSDTIYIGQNLIV) folds into the LysM 2 domain. The LysM 3 domain maps to 393–436 (SIHKVVKGDTLWGLSQKSGSPIASIKAWNHLSSDTILIGQYLRI).

This sequence belongs to the glycosyl hydrolase 73 family.

The protein resides in the secreted. It carries out the reaction Hydrolysis of (1-&gt;4)-beta-linkages between N-acetylmuramic acid and N-acetyl-D-glucosamine residues in a peptidoglycan and between N-acetyl-D-glucosamine residues in chitodextrins.. Hydrolyzes the cell wall of L.lactis and M.lysodeikticus. Required for cell separation during growth. The chain is Probable N-acetylmuramidase (acmA) from Lactococcus lactis subsp. cremoris (strain MG1363).